Consider the following 381-residue polypeptide: Succinyl-diaminopimelate desuccinylase (381 aa).

Zn(2+) is bound at residue His76. Asp78 is an active-site residue. Asp107 contacts Zn(2+). The active-site Proton acceptor is the Glu140. Residues Glu141, Glu169, and His354 each coordinate Zn(2+).

Belongs to the peptidase M20A family. DapE subfamily. In terms of assembly, homodimer. It depends on Zn(2+) as a cofactor. The cofactor is Co(2+).

It catalyses the reaction N-succinyl-(2S,6S)-2,6-diaminopimelate + H2O = (2S,6S)-2,6-diaminopimelate + succinate. The protein operates within amino-acid biosynthesis; L-lysine biosynthesis via DAP pathway; LL-2,6-diaminopimelate from (S)-tetrahydrodipicolinate (succinylase route): step 3/3. In terms of biological role, catalyzes the hydrolysis of N-succinyl-L,L-diaminopimelic acid (SDAP), forming succinate and LL-2,6-diaminopimelate (DAP), an intermediate involved in the bacterial biosynthesis of lysine and meso-diaminopimelic acid, an essential component of bacterial cell walls. The polypeptide is Succinyl-diaminopimelate desuccinylase (Gluconobacter oxydans (strain 621H) (Gluconobacter suboxydans)).